A 490-amino-acid polypeptide reads, in one-letter code: MPSLIPPIVSASSASNSAALDHLYHHQPPPRLPLGAVPQSPIQSQAPPPPHLHPPSHHFQLHPGHGHHQQPHHERDHRLPPPVASYSAHSHHLQHDPLPQRLESSQPGHPGAAEHRDHPQHALDEPSRSHDPYPSMATGALVHSESQQPASASLLLPISNVEEATGRRYHLDVVQQPRRARMCGFGDKDRRPITPPPCVRLIIIDVATGKEIDCNDIDHSMFVLNVDLWNEDGTREVNLVRSSTSSSPSVSSTVTYPYGSISVGESSHTYGQSAHPPSREAPYSVSQTASYAPEYQTQPTYSQGSSAYPSNGTYGPPQQYFPQHQAYRTETGPPGAMQTTVGGFRGYAQDQNALTKMAVVGGQPQGMFTRNLIGSLAASAFRLADTSEHLGIWFVLQDLSVRTEGPFRLRFSFVNVGPLAGQNGAKVNTGRAPILASCFSEVFNVYSAKKFPGVCESTPLSKTFAAQGIKIPIRKDANLKGGDGEDDYGD.

Disordered regions lie at residues 23–148 and 295–316; these read LYHH…ESQQ and YQTQ…TYGP. A compositionally biased stretch (basic residues) spans 54–70; sequence PPSHHFQLHPGHGHHQQ. The span at 112-131 shows a compositional bias: basic and acidic residues; that stretch reads AAEHRDHPQHALDEPSRSHD. The Velvet domain maps to 164–474; it reads ATGRRYHLDV…AAQGIKIPIR (311 aa). Residues 295-313 show a composition bias toward polar residues; sequence YQTQPTYSQGSSAYPSNGT.

This sequence belongs to the velvet family. VelB subfamily. Component of the heterotrimeric velvet complex composed of LAE1, VEL1 and VEL2; VEL1 acting as a bridging protein between LAE1 and VEL2. Forms a heterodimeric complex with VOS1; the formation of the VEL2-VOS1 complex is light-dependent.

It is found in the nucleus. It localises to the cytoplasm. Functionally, component of the velvet transcription factor complex that controls sexual/asexual developmental ratio in response to light, promoting sexual development in the darkness while stimulating asexual sporulation under illumination. The velvet complex acts as a global regulator for secondary metabolite gene expression. Component of the VEL2-VOS1 heterodimeric complex that plays a dual role in activating genes associated with spore maturation and repressing certain development-associated genes. The VEL2-VOS1 complex binds DNA through the DNA-binding domain of VOS1 that recognizes an 11-nucleotide consensus sequence 5'-CTGGCCGCGGC-3' consisting of two motifs in the promoters of key developmental regulatory genes. Regulates expression of cellulase-encoding genes such as the cellobiohydrolase-encoding genes cbh1 and cbh2, the endo-beta-1,4-glucanase-encoding genes egl1 and egl2, and the beta-glucosidase-encoding gene bgl1. This chain is Velvet complex subunit 2, found in Hypocrea jecorina (strain QM6a) (Trichoderma reesei).